Reading from the N-terminus, the 345-residue chain is Protein RecA (345 aa).

Gly-65–Thr-72 is a binding site for ATP.

Belongs to the RecA family.

It is found in the cytoplasm. In terms of biological role, can catalyze the hydrolysis of ATP in the presence of single-stranded DNA, the ATP-dependent uptake of single-stranded DNA by duplex DNA, and the ATP-dependent hybridization of homologous single-stranded DNAs. It interacts with LexA causing its activation and leading to its autocatalytic cleavage. The polypeptide is Protein RecA (Sulfurimonas denitrificans (strain ATCC 33889 / DSM 1251) (Thiomicrospira denitrificans (strain ATCC 33889 / DSM 1251))).